Consider the following 134-residue polypeptide: Small ribosomal subunit protein bS6 (134 aa).

The protein belongs to the bacterial ribosomal protein bS6 family.

Functionally, binds together with bS18 to 16S ribosomal RNA. The protein is Small ribosomal subunit protein bS6 of Chlorobium phaeobacteroides (strain BS1).